A 538-amino-acid polypeptide reads, in one-letter code: D-alanyl-D-alanine carboxypeptidase (538 aa).

Residues 1 to 21 (MKQSSPEPLRPRRTGGRGGAR) are disordered. A signal peptide spans 1 to 49 (MKQSSPEPLRPRRTGGRGGARRAAALVTIPLLPMTLLGASPALADASGA). The active-site Acyl-ester intermediate is the Ser-98. The active-site Proton acceptor is Lys-101. The segment at 146–319 (TLSAEDLDAM…KGDVGLGGVP (174 aa)) is absent in class-A beta-lactamases. The active site involves Ser-347. Substrate is bound at residue Lys-459. Positions 516–538 (GARMMRGPVQGSGELECSWVQAC) are cleaved as a propeptide — removed in mature form.

Belongs to the peptidase S13 family.

The protein localises to the secreted. It carries out the reaction Preferential cleavage: (Ac)2-L-Lys-D-Ala-|-D-Ala. Also transpeptidation of peptidyl-alanyl moieties that are N-acyl substituents of D-alanine.. The protein operates within cell wall biogenesis; peptidoglycan biosynthesis. Inhibited by benzylpenicillin, cephaloridine, ampicillin and cetiofur. Functionally, removes C-terminal D-alanyl residues from sugar-peptide cell wall precursors. The chain is D-alanyl-D-alanine carboxypeptidase (dac) from Actinomadura sp. (strain R39).